Reading from the N-terminus, the 196-residue chain is Prefoldin subunit 3 (196 aa).

A2 is subject to N-acetylalanine. N6-acetyllysine is present on K58.

The protein belongs to the prefoldin subunit alpha family. As to quaternary structure, heterohexamer of two PFD-alpha type and four PFD-beta type subunits. Binds to the C-terminal part of VHL.

The protein resides in the cytoplasm. The protein localises to the nucleus. Its function is as follows. Binds specifically to cytosolic chaperonin (c-CPN) and transfers target proteins to it. Binds to nascent polypeptide chain and promotes folding in an environment in which there are many competing pathways for nonnative proteins. This chain is Prefoldin subunit 3 (Vbp1), found in Mus musculus (Mouse).